Reading from the N-terminus, the 189-residue chain is Coatomer subunit zeta (189 aa).

It belongs to the adaptor complexes small subunit family. Oligomeric complex that consists of at least the alpha, beta, beta', gamma, delta, epsilon and zeta subunits.

Its subcellular location is the cytoplasm. The protein resides in the golgi apparatus membrane. It localises to the cytoplasmic vesicle. It is found in the COPI-coated vesicle membrane. Its function is as follows. The coatomer is a cytosolic protein complex that binds to dilysine motifs and reversibly associates with Golgi non-clathrin-coated vesicles, which further mediate biosynthetic protein transport from the ER, via the Golgi up to the trans Golgi network. Coatomer complex is required for budding from Golgi membranes, and is essential for the retrograde Golgi-to-ER transport of dilysine-tagged proteins. The zeta subunit may be involved in regulating the coat assembly and, hence, the rate of biosynthetic protein transport due to its association-dissociation properties with the coatomer complex. The protein is Coatomer subunit zeta (RET3) of Saccharomyces cerevisiae (strain ATCC 204508 / S288c) (Baker's yeast).